We begin with the raw amino-acid sequence, 333 residues long: MASTKEKLITHVSKEEPAGPTNKVTVVGVGMVGMAAAISILLKDLTDELALVDVMEDKLKGEAMDLQHGSLFLKTHKIVADKDYSVTANSKVVVVTAGARQQEGESRLNLVQRNVNIFKFIIPNIIKYSPNCILLVVSNPVDILTYVAWKLSGLPRNRVIGSGTNLDSARFRHLMGEKLGIHPSNCHGWVIGEHGDSSVPVWSGVNVAGVFLQGLNPDMGTDKDKEDWKSVHKMVVDSAYEVIKLKGYTSWAIGMSAADLCQSILKNLRKCHPVSTLVKGMHGVNEEVFLSVPCILGNSGLTDVVHMTLKSDEEKQLVKSAETLWGVQKDLTL.

NAD(+)-binding positions include 30–58 and R100; that span reads GMVG…MEDK. Positions 107, 139, and 170 each coordinate substrate. Residue N139 participates in NAD(+) binding. Residue H194 is the Proton acceptor of the active site. T249 serves as a coordination point for substrate.

Belongs to the LDH/MDH superfamily. LDH family. As to quaternary structure, homotetramer.

It is found in the cytoplasm. It carries out the reaction (S)-lactate + NAD(+) = pyruvate + NADH + H(+). Its pathway is fermentation; pyruvate fermentation to lactate; (S)-lactate from pyruvate: step 1/1. This is L-lactate dehydrogenase A chain (ldha) from Cyprinus carpio (Common carp).